We begin with the raw amino-acid sequence, 307 residues long: 4-hydroxythreonine-4-phosphate dehydrogenase (307 aa).

Substrate-binding residues include histidine 121 and threonine 122. A divalent metal cation is bound by residues histidine 150, histidine 189, and histidine 245. Residues lysine 253, asparagine 262, and arginine 271 each coordinate substrate.

This sequence belongs to the PdxA family. Homodimer. Requires Zn(2+) as cofactor. It depends on Mg(2+) as a cofactor. Co(2+) serves as cofactor.

The protein resides in the cytoplasm. The enzyme catalyses 4-(phosphooxy)-L-threonine + NAD(+) = 3-amino-2-oxopropyl phosphate + CO2 + NADH. Its pathway is cofactor biosynthesis; pyridoxine 5'-phosphate biosynthesis; pyridoxine 5'-phosphate from D-erythrose 4-phosphate: step 4/5. Catalyzes the NAD(P)-dependent oxidation of 4-(phosphooxy)-L-threonine (HTP) into 2-amino-3-oxo-4-(phosphooxy)butyric acid which spontaneously decarboxylates to form 3-amino-2-oxopropyl phosphate (AHAP). This is 4-hydroxythreonine-4-phosphate dehydrogenase from Sulfurimonas denitrificans (strain ATCC 33889 / DSM 1251) (Thiomicrospira denitrificans (strain ATCC 33889 / DSM 1251)).